The primary structure comprises 174 residues: 3-hydroxyanthranilate 3,4-dioxygenase (174 aa).

R47 is an O2 binding site. Fe cation-binding residues include H51, E57, and H95. E57 contributes to the substrate binding site. Substrate-binding residues include R99 and E110. 4 residues coordinate Fe cation: C125, C128, C162, and C165.

Belongs to the 3-HAO family. In terms of assembly, homodimer. It depends on Fe(2+) as a cofactor.

The catalysed reaction is 3-hydroxyanthranilate + O2 = (2Z,4Z)-2-amino-3-carboxymuconate 6-semialdehyde. It functions in the pathway cofactor biosynthesis; NAD(+) biosynthesis; quinolinate from L-kynurenine: step 3/3. Inhibited by 4-chloro-3-hydroxyanthranilate. Mechanism of inactivation involves the oxidation of the catalytic active site Fe(2+) to the catalytically inactive Fe(3+) oxidation state, superoxide production, and formation of two disulfide bonds between Cys-125 and Cys-128, and Cys-162 and Cys-165. Enzyme can be reactivated under reducing conditions. In terms of biological role, catalyzes the oxidative ring opening of 3-hydroxyanthranilate to 2-amino-3-carboxymuconate semialdehyde, which spontaneously cyclizes to quinolinate. This is 3-hydroxyanthranilate 3,4-dioxygenase from Cupriavidus metallidurans (strain ATCC 43123 / DSM 2839 / NBRC 102507 / CH34) (Ralstonia metallidurans).